The primary structure comprises 318 residues: NADH-ubiquinone oxidoreductase chain 1 (318 aa).

The next 8 membrane-spanning stretches (helical) occupy residues 2–22, 70–90, 100–120, 136–156, 171–191, 231–251, 253–273, and 293–313; these read FFIN…FLTL, LFII…VPLP, LGIL…LWSG, VAQT…VLLM, HMWL…STLA, IILM…YINL, ELYS…FLWI, and FLPL…FTAG.

The protein belongs to the complex I subunit 1 family. As to quaternary structure, core subunit of respiratory chain NADH dehydrogenase (Complex I) which is composed of 45 different subunits.

It localises to the mitochondrion inner membrane. The catalysed reaction is a ubiquinone + NADH + 5 H(+)(in) = a ubiquinol + NAD(+) + 4 H(+)(out). Functionally, core subunit of the mitochondrial membrane respiratory chain NADH dehydrogenase (Complex I) which catalyzes electron transfer from NADH through the respiratory chain, using ubiquinone as an electron acceptor. Essential for the catalytic activity and assembly of complex I. This chain is NADH-ubiquinone oxidoreductase chain 1 (Mtnd1), found in Mus musculus (Mouse).